A 495-amino-acid polypeptide reads, in one-letter code: Aspartyl/glutamyl-tRNA(Asn/Gln) amidotransferase subunit B (495 aa).

The protein belongs to the GatB/GatE family. GatB subfamily. As to quaternary structure, heterotrimer of A, B and C subunits.

It carries out the reaction L-glutamyl-tRNA(Gln) + L-glutamine + ATP + H2O = L-glutaminyl-tRNA(Gln) + L-glutamate + ADP + phosphate + H(+). The enzyme catalyses L-aspartyl-tRNA(Asn) + L-glutamine + ATP + H2O = L-asparaginyl-tRNA(Asn) + L-glutamate + ADP + phosphate + 2 H(+). Allows the formation of correctly charged Asn-tRNA(Asn) or Gln-tRNA(Gln) through the transamidation of misacylated Asp-tRNA(Asn) or Glu-tRNA(Gln) in organisms which lack either or both of asparaginyl-tRNA or glutaminyl-tRNA synthetases. The reaction takes place in the presence of glutamine and ATP through an activated phospho-Asp-tRNA(Asn) or phospho-Glu-tRNA(Gln). This Methanosarcina mazei (strain ATCC BAA-159 / DSM 3647 / Goe1 / Go1 / JCM 11833 / OCM 88) (Methanosarcina frisia) protein is Aspartyl/glutamyl-tRNA(Asn/Gln) amidotransferase subunit B.